The following is a 164-amino-acid chain: Large ribosomal subunit protein uL15 (164 aa).

The span at 1-14 (MKLNEIQDNPGSSK) shows a compositional bias: polar residues. The disordered stretch occupies residues 1–35 (MKLNEIQDNPGSSKSRMRVGRGIGSGKGKTCGRGV). Positions 21–35 (RGIGSGKGKTCGRGV) are enriched in gly residues.

The protein belongs to the universal ribosomal protein uL15 family. As to quaternary structure, part of the 50S ribosomal subunit.

In terms of biological role, binds to the 23S rRNA. The sequence is that of Large ribosomal subunit protein uL15 from Methylocella silvestris (strain DSM 15510 / CIP 108128 / LMG 27833 / NCIMB 13906 / BL2).